The chain runs to 823 residues: Dolichyl-diphosphooligosaccharide--protein glycosyltransferase subunit STT3B (823 aa).

Positions 1–58 (MAEPSAPESKHKSSLNSSPWSGLMALGNSRHGHHGPGTQSASSAAAPKPGPPAGLSGG) are disordered. A2 carries the post-translational modification N-acetylalanine. The Cytoplasmic segment spans residues 2–41 (AEPSAPESKHKSSLNSSPWSGLMALGNSRHGHHGPGTQSA). A phosphoserine mark is found at S13, S18, and S29. The helical transmembrane segment at 42–83 (SSAAAPKPGPPAGLSGGLSQPAGWQSLLSFTILFLAWLAGFS) threads the bilayer. The Lumenal portion of the chain corresponds to 84–170 (SRLFAVIRFE…VHIRDVCVFL (87 aa)). The short motif at 98–100 (EFD) is the DXD motif 1 element. D100 provides a ligand contact to Mn(2+). Residues 171–189 (APTFSGLTSISTFLLTREL) traverse the membrane as a helical segment. Residues 190 to 191 (WN) are Cytoplasmic-facing. A helical transmembrane segment spans residues 192 to 209 (QGAGLLAACFIAIVPGYI). The Lumenal segment spans residues 210-220 (SRSVAGSFDNE). Mn(2+) is bound by residues D218 and E220. A DXD motif 2 motif is present at residues 218-220 (DNE). A helical transmembrane segment spans residues 221–240 (GIAIFALQFTYYLWVKSVKT). The Cytoplasmic portion of the chain corresponds to 241 to 242 (GS). A helical membrane pass occupies residues 243–257 (VFWTMCCCLSYFYMV). Residues 258–262 (SAWGG) are Lumenal-facing. A helical membrane pass occupies residues 263-279 (YVFIINLIPLHVFVLLL). The Cytoplasmic portion of the chain corresponds to 280 to 284 (MQRYS). A helical transmembrane segment spans residues 285-310 (KRVYIAYSTFYIVGLILSMQIPFVGF). Topologically, residues 311 to 318 (QPIRTSEH) are lumenal. The helical transmembrane segment at 319 to 338 (MAAAGVFALLQAYAFLQYLR) threads the bilayer. Topologically, residues 339–347 (DRLTKQEFQ) are cytoplasmic. Residues 348 to 368 (TLFFLGVSLAAGAVFLSVIYL) form a helical membrane-spanning segment. The Lumenal portion of the chain corresponds to 369-407 (TYTGYIAPWSGRFYSLWDTGYAKIHIPIIASVSEHQPTT). The SVSE motif motif lies at 399-402 (SVSE). The helical transmembrane segment at 408 to 430 (WVSFFFDLHILVCTFPAGLWFCI) threads the bilayer. The Cytoplasmic segment spans residues 431–436 (KNINDE). Residues 437–453 (RVFVALYAISAVYFAGV) form a helical membrane-spanning segment. Topologically, residues 454–457 (MVRL) are lumenal. A dolichyl diphosphooligosaccharide-binding site is contributed by R456. The helical transmembrane segment at 458 to 479 (MLTLTPVVCMLSAIAFSNVFEH) threads the bilayer. The Cytoplasmic segment spans residues 480 to 523 (YLGDDMKRENPPVEDSSDEDDKRNPGNLYDKAGKVRKHVTEQEK). The tract at residues 487 to 526 (RENPPVEDSSDEDDKRNPGNLYDKAGKVRKHVTEQEKPEE) is disordered. Phosphoserine is present on residues S495 and S496. Over residues 517–526 (HVTEQEKPEE) the composition is skewed to basic and acidic residues. Residues 524–549 (PEEGLGPNIKSIVTMLMLMLLMMFAV) traverse the membrane as a helical segment. Over 550-823 (HCTWVTSNAY…KGKKTSKKTV (274 aa)) the chain is Lumenal. Residues 601-603 (WWD) form an interacts with target acceptor peptide in protein substrate region. The WWDYG motif motif lies at 601 to 605 (WWDYG). Y606 provides a ligand contact to dolichyl diphosphooligosaccharide. Residues N613 and N620 are each glycosylated (N-linked (GlcNAc...) asparagine). N624 carries an N-linked (GlcNAc...) (high mannose) asparagine glycan. N638 carries N-linked (GlcNAc...) asparagine glycosylation. Residues 668-675 (DINKFLWM) carry the DK motif motif.

This sequence belongs to the STT3 family. As to quaternary structure, component of the oligosaccharyltransferase (OST) complex. There are 2 OST complexes, OST-A and OST-B, which contain STT3A or STT3B as catalytic subunit, respectively. OST-A and OST-B contain common core subunits RPN1, RPN2, OST48, OST4, DAD1 and TMEM258, and OST-B contains either MAGT1 or TUSC3 as specific accessory subunit. Mg(2+) is required as a cofactor. Mn(2+) serves as cofactor.

The protein resides in the endoplasmic reticulum membrane. It carries out the reaction a di-trans,poly-cis-dolichyl diphosphooligosaccharide + L-asparaginyl-[protein] = N(4)-(oligosaccharide-(1-&gt;4)-N-acetyl-beta-D-glucosaminyl-(1-&gt;4)-N-acetyl-beta-D-glucosaminyl)-L-asparaginyl-[protein] + a di-trans,poly-cis-dolichyl diphosphate + H(+). Its pathway is protein modification; protein glycosylation. Catalytic subunit of the oligosaccharyl transferase (OST) complex that catalyzes the initial transfer of a defined glycan (Glc(3)Man(9)GlcNAc(2) in eukaryotes) from the lipid carrier dolichol-pyrophosphate to an asparagine residue within an Asn-X-Ser/Thr consensus motif in nascent polypeptide chains, the first step in protein N-glycosylation. N-glycosylation occurs cotranslationally and the complex associates with the Sec61 complex at the channel-forming translocon complex that mediates protein translocation across the endoplasmic reticulum (ER). All subunits are required for a maximal enzyme activity. This subunit contains the active site and the acceptor peptide and donor lipid-linked oligosaccharide (LLO) binding pockets. STT3B is present in a small subset of OST complexes and mediates both cotranslational and post-translational N-glycosylation of target proteins: STT3B-containing complexes are required for efficient post-translational glycosylation and while they are less competent than STT3A-containing complexes for cotranslational glycosylation, they have the ability to mediate glycosylation of some nascent sites that are not accessible for STT3A. STT3B-containing complexes also act post-translationally and mediate modification of skipped glycosylation sites in unfolded proteins. Plays a role in ER-associated degradation (ERAD) pathway that mediates ubiquitin-dependent degradation of misfolded endoplasmic reticulum proteins by mediating N-glycosylation of unfolded proteins, which are then recognized by the ERAD pathway and targeted for degradation. In Mus musculus (Mouse), this protein is Dolichyl-diphosphooligosaccharide--protein glycosyltransferase subunit STT3B.